Here is a 126-residue protein sequence, read N- to C-terminus: Probable 4-amino-4-deoxy-L-arabinose-phosphoundecaprenol flippase subunit ArnF (126 aa).

Over 1 to 4 the chain is Cytoplasmic; it reads MKGY. The helical transmembrane segment at 5-25 threads the bilayer; it reads IWGLISVLLVTIAQLLLKWGV. The Periplasmic segment spans residues 26 to 49; sequence VNLPALNLGLHWFDIEWLWSHRHS. A helical transmembrane segment spans residues 50–70; that stretch reads LVAVMAGLAGYLLSMLCWLFT. Residues 71-79 lie on the Cytoplasmic side of the membrane; the sequence is LKYLPLNKA. Residues 80–100 traverse the membrane as a helical segment; the sequence is YPLISLSYVFVYLMVALLPWF. At 101–102 the chain is on the periplasmic side; the sequence is NE. The helical transmembrane segment at 103–123 threads the bilayer; it reads TITLLKTAGVIFILYGVWLIS. Residues 124 to 126 lie on the Cytoplasmic side of the membrane; sequence RPE.

Belongs to the ArnF family. As to quaternary structure, heterodimer of ArnE and ArnF.

Its subcellular location is the cell inner membrane. It participates in bacterial outer membrane biogenesis; lipopolysaccharide biosynthesis. Translocates 4-amino-4-deoxy-L-arabinose-phosphoundecaprenol (alpha-L-Ara4N-phosphoundecaprenol) from the cytoplasmic to the periplasmic side of the inner membrane. In Photorhabdus laumondii subsp. laumondii (strain DSM 15139 / CIP 105565 / TT01) (Photorhabdus luminescens subsp. laumondii), this protein is Probable 4-amino-4-deoxy-L-arabinose-phosphoundecaprenol flippase subunit ArnF.